Reading from the N-terminus, the 271-residue chain is uncharacterized protein (271 aa).

The protein belongs to the HAD-like hydrolase superfamily.

This is an uncharacterized protein from Staphylococcus aureus (strain Mu50 / ATCC 700699).